The following is a 757-amino-acid chain: Palmitoyltransferase AKR1 (757 aa).

Polar residues-rich tracts occupy residues 1 to 20 (MSDI…STDP) and 36 to 46 (ESISSLQPIVS). A disordered region spans residues 1–54 (MSDINTESGESTSLPNSTDPPLSDVNIDVEDDDTAESISSLQPIVSNTTNPPEE). Topologically, residues 1–307 (MSDINTESGE…KLFKKSDHAK (307 aa)) are cytoplasmic. ANK repeat units follow at residues 58 to 88 (PVLG…DLNT), 92 to 121 (GDIT…DVNA), 126 to 155 (LEAT…DPTM), 159 to 188 (QGFN…AKGI), 197 to 226 (KGRT…STKI), and 230 to 259 (GGFT…DFFL). Residues 308–328 (VITFFVPLVALSIIFILFTHL) traverse the membrane as a helical segment. Topologically, residues 329–331 (HPL) are lumenal. A helical membrane pass occupies residues 332-352 (FALLISLIFGLAVNKALKELI). Residues 353-375 (LPSYSNYGLHSTSLLKSPFLSGT) are Cytoplasmic-facing. A helical membrane pass occupies residues 376 to 396 (FFGSLLLLTIVWIFKIAPFTI). Residues 397 to 402 (FKSRLL) lie on the Lumenal side of the membrane. A helical transmembrane segment spans residues 403–423 (TNFFMFLILMQIYYLFIKLIF). The Cytoplasmic portion of the chain corresponds to 424–498 (SDPGCVPIET…YNDIGLKNHK (75 aa)). A DHHC domain is found at 455–505 (NFCLETWIRKPLRSHFSTLNTHNVARFDHFCPWIYNDIGLKNHKNFMWFIL). The active-site S-palmitoyl cysteine intermediate is the cysteine 485. A helical membrane pass occupies residues 499 to 519 (NFMWFILLTEVGIWFFISLTM). The Lumenal portion of the chain corresponds to 520 to 550 (KYFDILEDTNEDVACFLLGDDELCAGFVYDR). The chain crosses the membrane as a helical span at residues 551–571 (FTFLIALWALIQSVWVGFLIV). Over 572-757 (VQVFQTFTGV…YPEPTGPESV (186 aa)) the chain is Cytoplasmic. The segment at 614–647 (ELRNDDDDTAASRTGNNPNHSNGTTIPSEGSRIN) is disordered. The span at 624–646 (ASRTGNNPNHSNGTTIPSEGSRI) shows a compositional bias: polar residues.

The protein belongs to the DHHC palmitoyltransferase family. AKR/ZDHHC17 subfamily.

The protein resides in the early endosome membrane. Its subcellular location is the golgi apparatus membrane. The catalysed reaction is L-cysteinyl-[protein] + hexadecanoyl-CoA = S-hexadecanoyl-L-cysteinyl-[protein] + CoA. Its function is as follows. Palmitoyltransferase specific for casein kinase 1. This chain is Palmitoyltransferase AKR1 (AKR1), found in Naumovozyma castellii (Yeast).